The following is a 199-amino-acid chain: Protein MA_3591 (199 aa).

Residues 5 to 196 enclose the AMMECR1 domain; it reads TEGRVAVKLA…EKEPEGEVIE (192 aa).

The chain is Protein MA_3591 from Methanosarcina acetivorans (strain ATCC 35395 / DSM 2834 / JCM 12185 / C2A).